The following is a 291-amino-acid chain: Undecaprenyl-diphosphatase (291 aa).

A run of 8 helical transmembrane segments spans residues 1-21 (MFII…LTEF), 48-68 (SAFT…AWVF), 102-122 (LHVL…DDFI), 126-146 (LFSV…MIIA), 162-182 (ISYF…WPGF), 203-223 (SDFT…LSLL), 231-251 (IADI…GLIA), and 267-287 (FAIY…GFGI).

This sequence belongs to the UppP family.

The protein resides in the cell membrane. It carries out the reaction di-trans,octa-cis-undecaprenyl diphosphate + H2O = di-trans,octa-cis-undecaprenyl phosphate + phosphate + H(+). Functionally, catalyzes the dephosphorylation of undecaprenyl diphosphate (UPP). Confers resistance to bacitracin. The protein is Undecaprenyl-diphosphatase of Staphylococcus aureus (strain USA300).